The chain runs to 1194 residues: Immunoglobulin superfamily member 3 (1194 aa).

A signal peptide spans 1-19; sequence MKCFFPVLSCLAVLGVVSA. 8 Ig-like C2-type domains span residues 20-138, 143-262, 276-386, 401-539, 545-661, 676-803, 813-945, and 949-1097; these read QRQV…AKMN, PDSL…WYAM, PTDK…KTVT, PIVV…VSIT, FAVT…WTRL, PVTK…EEVS, PDSR…TAVT, and PDAA…YRLT. Topologically, residues 20-1124 are extracellular; that stretch reads QRQVTVQEGP…LQSLICSNDA (1105 aa). 2 disulfide bridges follow: Cys-42–Cys-120 and Cys-167–Cys-246. Asn-43 is a glycosylation site (N-linked (GlcNAc...) asparagine). The short motif at 250–252 is the EWI motif element; it reads EWI. Cys-302 and Cys-376 are disulfide-bonded. Asn-418 carries an N-linked (GlcNAc...) asparagine glycan. Disulfide bonds link Cys-432/Cys-511, Cys-566/Cys-645, Cys-701/Cys-782, Cys-838/Cys-918, and Cys-974/Cys-1080. The N-linked (GlcNAc...) asparagine glycan is linked to Asn-842. The disordered stretch occupies residues 997 to 1030; it reads GGGKRGSLGIDEQEEEEEEEDISQEEDSEDPTER. The segment covering 1007-1026 has biased composition (acidic residues); the sequence is DEQEEEEEEEDISQEEDSED. N-linked (GlcNAc...) asparagine glycosylation occurs at Asn-1077. A helical transmembrane segment spans residues 1125–1145; the sequence is LFYFVFFYPFPIFGILIITIL. Over 1146-1194 the chain is Cytoplasmic; the sequence is LVRFKSRNSSKNSEGKNGVPLLWIKEPHLNYSPTCLEPPVLSIHPGAID.

In terms of tissue distribution, expressed in the lacrimal duct and lacrimal gland.

The protein localises to the membrane. This Mus musculus (Mouse) protein is Immunoglobulin superfamily member 3 (Igsf3).